Consider the following 351-residue polypeptide: Glycerol-1-phosphate dehydrogenase [NAD(P)+] (351 aa).

NAD(+)-binding positions include 97–101 (GKVID) and 119–122 (TSPS). Residue aspartate 124 coordinates substrate. An NAD(+)-binding site is contributed by serine 128. Aspartate 171 is a binding site for substrate. Zn(2+) contacts are provided by aspartate 171 and histidine 251. Histidine 255 lines the substrate pocket. Zn(2+) is bound at residue histidine 267.

It belongs to the glycerol-1-phosphate dehydrogenase family. In terms of assembly, homodimer. Zn(2+) serves as cofactor.

The protein localises to the cytoplasm. The enzyme catalyses sn-glycerol 1-phosphate + NAD(+) = dihydroxyacetone phosphate + NADH + H(+). The catalysed reaction is sn-glycerol 1-phosphate + NADP(+) = dihydroxyacetone phosphate + NADPH + H(+). The protein operates within membrane lipid metabolism; glycerophospholipid metabolism. Catalyzes the NAD(P)H-dependent reduction of dihydroxyacetonephosphate (DHAP or glycerone phosphate) to glycerol 1-phosphate (G1P). The G1P thus generated is used as the glycerophosphate backbone of phospholipids in the cellular membranes of Archaea. This Saccharolobus solfataricus (strain ATCC 35092 / DSM 1617 / JCM 11322 / P2) (Sulfolobus solfataricus) protein is Glycerol-1-phosphate dehydrogenase [NAD(P)+].